We begin with the raw amino-acid sequence, 194 residues long: Fe/S biogenesis protein NfuA (194 aa).

Residues C151 and C154 each contribute to the [4Fe-4S] cluster site.

The protein belongs to the NfuA family. In terms of assembly, homodimer. Requires [4Fe-4S] cluster as cofactor.

Functionally, involved in iron-sulfur cluster biogenesis. Binds a 4Fe-4S cluster, can transfer this cluster to apoproteins, and thereby intervenes in the maturation of Fe/S proteins. Could also act as a scaffold/chaperone for damaged Fe/S proteins. In Photobacterium profundum (strain SS9), this protein is Fe/S biogenesis protein NfuA.